A 2248-amino-acid polypeptide reads, in one-letter code: Zinc finger protein lin-13 (2248 aa).

Positions 1 to 189 (MDEFELFQQL…TYASQYSRPP (189 aa)) are disordered. The span at 29-38 (QQANNNQSAP) shows a compositional bias: polar residues. A compositionally biased stretch (basic and acidic residues) spans 54-92 (KQREEEEAQRLADFMQKDMKEPAVKRKRGSEEYKKDPLE). Acidic residues predominate over residues 145–155 (ELDENYMEENE). The short motif at 440-444 (PLVPV) is the Required for interaction with hpl-2 isoform a element. Residues 503-525 (HTCIKCGKTFGTEFMLKHHAQSH) form a C2H2-type 1 zinc finger. The interval 603–665 (KTKKENRNIT…FTSSKQKKKR (63 aa)) is disordered. Basic and acidic residues predominate over residues 605-620 (KKENRNITDSNEKEFS). 6 C2H2-type zinc fingers span residues 812–837 (VRCIDPECKAHLCSVISLKTHLSDVH), 959–982 (YSCSWCDREYESLNQFVDHLTRFH), 1140–1162 (LMCYMCELTFDSYDELTHHMDDH), 1556–1578 (FKCQKCSLAFYTNGSLESHMRDH), 1601–1623 (WLCRNCCVVFENQPKYQKHMAIH), and 1657–1680 (YSCGTCLCTFASDLALFDHLSVAH). Residues 1859–1877 (PRSSLQTNGSSMGSVTTNG) are compositionally biased toward polar residues. The tract at residues 1859–1900 (PRSSLQTNGSSMGSVTTNGGRVVRPSPPNSMNVTLRRAPPQQ) is disordered.

Interacts (via PLVPV motif) with chromobox protein homolog hpl-2 (via chromo (shadow subtype) domain); the interaction is direct and influences localization of hpl-2 to nuclear foci. In the L3 stage, expressed in syncytial hypodermal cell 7, body wall muscles, intestinal cells, distal tip cells and many neurons.

It is found in the nucleus. Its function is as follows. Involved in repression of vulval fate, possibly by a tumor suppressor protein Rb-mediated mechanism. May act in a common pathway with retinoblastoma-like protein homolog lin-35 and hpl-2 to influence the ER stress response in the intestine. Plays a role in recruiting chromobox protein homolog hpl-2 to specific chromatin sites. This Caenorhabditis elegans protein is Zinc finger protein lin-13 (lin-13).